We begin with the raw amino-acid sequence, 399 residues long: Acetate kinase (399 aa).

Residue asparagine 8 coordinates Mg(2+). ATP is bound at residue lysine 15. A substrate-binding site is contributed by arginine 89. The Proton donor/acceptor role is filled by aspartate 146. ATP is bound by residues 206–210 (HVGNG), 283–285 (DMR), and 331–335 (GMGEN). Glutamate 383 is a binding site for Mg(2+).

This sequence belongs to the acetokinase family. As to quaternary structure, homodimer. Mg(2+) serves as cofactor. Mn(2+) is required as a cofactor.

The protein localises to the cytoplasm. It carries out the reaction acetate + ATP = acetyl phosphate + ADP. It participates in metabolic intermediate biosynthesis; acetyl-CoA biosynthesis; acetyl-CoA from acetate: step 1/2. Catalyzes the formation of acetyl phosphate from acetate and ATP. Can also catalyze the reverse reaction. This is Acetate kinase from Streptococcus equi subsp. equi (strain 4047).